Here is a 55-residue protein sequence, read N- to C-terminus: ATP synthase F(0) complex subunit 8 (55 aa).

Residues 7 to 24 form a helical membrane-spanning segment; the sequence is NPWFYIMLMSWLTFSLII. Positions 35–55 are disordered; that stretch reads NPPSNKTSTTTRTLPWTWPWT. Residues 41–55 are compositionally biased toward low complexity; it reads TSTTTRTLPWTWPWT.

Belongs to the ATPase protein 8 family. In terms of assembly, component of the ATP synthase complex composed at least of ATP5F1A/subunit alpha, ATP5F1B/subunit beta, ATP5MC1/subunit c (homooctomer), MT-ATP6/subunit a, MT-ATP8/subunit 8, ATP5ME/subunit e, ATP5MF/subunit f, ATP5MG/subunit g, ATP5MK/subunit k, ATP5MJ/subunit j, ATP5F1C/subunit gamma, ATP5F1D/subunit delta, ATP5F1E/subunit epsilon, ATP5PF/subunit F6, ATP5PB/subunit b, ATP5PD/subunit d, ATP5PO/subunit OSCP. ATP synthase complex consists of a soluble F(1) head domain (subunits alpha(3) and beta(3)) - the catalytic core - and a membrane F(0) domain - the membrane proton channel (subunits c, a, 8, e, f, g, k and j). These two domains are linked by a central stalk (subunits gamma, delta, and epsilon) rotating inside the F1 region and a stationary peripheral stalk (subunits F6, b, d, and OSCP).

Its subcellular location is the mitochondrion membrane. In terms of biological role, subunit 8, of the mitochondrial membrane ATP synthase complex (F(1)F(0) ATP synthase or Complex V) that produces ATP from ADP in the presence of a proton gradient across the membrane which is generated by electron transport complexes of the respiratory chain. ATP synthase complex consist of a soluble F(1) head domain - the catalytic core - and a membrane F(1) domain - the membrane proton channel. These two domains are linked by a central stalk rotating inside the F(1) region and a stationary peripheral stalk. During catalysis, ATP synthesis in the catalytic domain of F(1) is coupled via a rotary mechanism of the central stalk subunits to proton translocation. In vivo, can only synthesize ATP although its ATP hydrolase activity can be activated artificially in vitro. Part of the complex F(0) domain. This is ATP synthase F(0) complex subunit 8 from Corythaixoides concolor (Grey go-away-bird).